The following is a 171-amino-acid chain: 3-hydroxydecanoyl-[acyl-carrier-protein] dehydratase (171 aa).

His70 is an active-site residue.

The protein belongs to the thioester dehydratase family. FabA subfamily. As to quaternary structure, homodimer.

Its subcellular location is the cytoplasm. It carries out the reaction a (3R)-hydroxyacyl-[ACP] = a (2E)-enoyl-[ACP] + H2O. The enzyme catalyses (3R)-hydroxydecanoyl-[ACP] = (2E)-decenoyl-[ACP] + H2O. It catalyses the reaction (2E)-decenoyl-[ACP] = (3Z)-decenoyl-[ACP]. The protein operates within lipid metabolism; fatty acid biosynthesis. Necessary for the introduction of cis unsaturation into fatty acids. Catalyzes the dehydration of (3R)-3-hydroxydecanoyl-ACP to E-(2)-decenoyl-ACP and then its isomerization to Z-(3)-decenoyl-ACP. Can catalyze the dehydratase reaction for beta-hydroxyacyl-ACPs with saturated chain lengths up to 16:0, being most active on intermediate chain length. This is 3-hydroxydecanoyl-[acyl-carrier-protein] dehydratase from Mesorhizobium japonicum (strain LMG 29417 / CECT 9101 / MAFF 303099) (Mesorhizobium loti (strain MAFF 303099)).